The primary structure comprises 229 residues: LexA repressor (229 aa).

A DNA-binding region (H-T-H motif) is located at residues 28-48 (IREIGEALDIRSTNGVNDHLK). Catalysis depends on for autocatalytic cleavage activity residues Ser147 and Lys184.

This sequence belongs to the peptidase S24 family. As to quaternary structure, homodimer.

The enzyme catalyses Hydrolysis of Ala-|-Gly bond in repressor LexA.. Functionally, represses a number of genes involved in the response to DNA damage (SOS response), including recA and lexA. In the presence of single-stranded DNA, RecA interacts with LexA causing an autocatalytic cleavage which disrupts the DNA-binding part of LexA, leading to derepression of the SOS regulon and eventually DNA repair. The protein is LexA repressor of Anaeromyxobacter dehalogenans (strain 2CP-C).